Here is a 377-residue protein sequence, read N- to C-terminus: MSTFLISCGGTGGHLSPGIALAEGLQARGHSVRLLISHKKVDARLIAKYPRLDFTRVPGTGFSLHPVRLARFIGTQSRGLWFCRGLVRAARPAGVVAFGGFTSAGVVLAARWRGVPVALHEANRVPGRAIRVLSRFANRVYLPPGVRLASAPPGAVRPMGLPVRQEIRRVSQTDARARFGFAVGQKLLVVFGGSQGATVLNDWVRREMPALAAEGVQVCCVTGLGKGSDETVELRTHAGQPVRIQFLTFCDCVPELLSAADLVLSRAGAGTIAELVRCETPAILVPFPQAADDHQRANAAFFERQGGGVVVEQTMMHSVRAEVLDVIFDEELLRKFRGNLQRMDRANSLELMLNDLEEMTRTHGASGSPGTATAVVT.

UDP-N-acetyl-alpha-D-glucosamine-binding positions include 11 to 13 (TGG), asparagine 123, arginine 164, serine 194, and glutamine 295.

It belongs to the glycosyltransferase 28 family. MurG subfamily.

It localises to the cell inner membrane. It carries out the reaction di-trans,octa-cis-undecaprenyl diphospho-N-acetyl-alpha-D-muramoyl-L-alanyl-D-glutamyl-meso-2,6-diaminopimeloyl-D-alanyl-D-alanine + UDP-N-acetyl-alpha-D-glucosamine = di-trans,octa-cis-undecaprenyl diphospho-[N-acetyl-alpha-D-glucosaminyl-(1-&gt;4)]-N-acetyl-alpha-D-muramoyl-L-alanyl-D-glutamyl-meso-2,6-diaminopimeloyl-D-alanyl-D-alanine + UDP + H(+). It functions in the pathway cell wall biogenesis; peptidoglycan biosynthesis. In terms of biological role, cell wall formation. Catalyzes the transfer of a GlcNAc subunit on undecaprenyl-pyrophosphoryl-MurNAc-pentapeptide (lipid intermediate I) to form undecaprenyl-pyrophosphoryl-MurNAc-(pentapeptide)GlcNAc (lipid intermediate II). The sequence is that of UDP-N-acetylglucosamine--N-acetylmuramyl-(pentapeptide) pyrophosphoryl-undecaprenol N-acetylglucosamine transferase from Opitutus terrae (strain DSM 11246 / JCM 15787 / PB90-1).